The chain runs to 168 residues: Sperm acrosome-associated protein 9 (168 aa).

As to quaternary structure, microtubule inner protein component of sperm flagellar doublet microtubules. Interacts with CABP1 and CALR. Interacts with INCA1. Interacts with microtubules. In terms of tissue distribution, expressed in sperm (at protein level). Expressed from almost all the cell types of testis, with abundant expression in round and elongated spermatids (at protein level). Predominantly expressed in tissues containing motile cilia.

It is found in the cytoplasm. It localises to the cytoplasmic vesicle. The protein localises to the secretory vesicle. Its subcellular location is the acrosome. The protein resides in the cytoskeleton. It is found in the cilium basal body. It localises to the flagellum axoneme. The protein localises to the cilium axoneme. Its subcellular location is the nucleus. In terms of biological role, microtubule inner protein (MIP) part of the dynein-decorated doublet microtubules (DMTs) of multiciliated respiratory cells and the distal singlet microtubules of monoflagellated spermatozoa. Forms an extensive interaction network cross-linking the lumen of axonemal doublet microtubules. The chain is Sperm acrosome-associated protein 9 from Mus musculus (Mouse).